We begin with the raw amino-acid sequence, 240 residues long: Mannose-binding protein C (240 aa).

The signal sequence occupies residues 1–18; the sequence is MSLFPSLHLLLLIVMTAS. 2 Collagen-like domains span residues 39–61 and 67–97; these read SPGI…KGEP and GLQG…GDSG. P46 carries the hydroxyproline modification. A disordered region spans residues 48-102; it reads KDGLDGAKGEKGEPGQGLIGLQGLPGMVGPQGSPGIPGLPGLKGQKGDSGIDPGN. Residues 49-60 show a composition bias toward basic and acidic residues; sequence DGLDGAKGEKGE. A hydroxyproline mark is found at P72, P81, and P87. A coiled-coil region spans residues 104–122; that stretch reads LANLRSELDNIKKWLIFAQ. In terms of domain architecture, C-type lectin spans 126-237; it reads VGKKLYLTNG…CSSQLSAVCE (112 aa). Disulfide bonds link C147/C236 and C214/C228.

In terms of assembly, interacts with MASP1 and MASP2. Interacts with MEP1A and MEP1B and may inhibit their catalytic activity. Forms oligomeric complexes of 2 or 3 homotrimers. As to expression, expressed in liver. Weakly expressed in kidney and testis.

The protein localises to the secreted. Its function is as follows. Calcium-dependent lectin involved in innate immune defense. Binds mannose, fucose and N-acetylglucosamine on different microorganisms and activates the lectin complement pathway. Binds to late apoptotic cells, as well as to apoptotic blebs and to necrotic cells, but not to early apoptotic cells, facilitating their uptake by macrophages. According to some authors, it only binds mannose. The protein is Mannose-binding protein C of Sus scrofa (Pig).